Here is a 578-residue protein sequence, read N- to C-terminus: Synaptic defective enhancer 1 (578 aa).

Disordered stretches follow at residues 1 to 62 (MGEP…RKET), 173 to 216 (SEQA…SMDQ), 426 to 457 (PPLPPPQAPFSGDCWRAQPAAPVPASVPVSSA), and 474 to 578 (LGLH…FSNF). Positions 444 to 455 (PAAPVPASVPVS) are enriched in low complexity. 2 stretches are compositionally biased toward pro residues: residues 481–491 (PPPPPPPPPPT) and 500–542 (IPPP…PNPN). A compositionally biased stretch (low complexity) spans 565 to 578 (NQFPPQQQQSFSNF).

May interact (via C-terminus) with ssup-72; the interaction may prevent ssup-72 binding to RNA polymerase II subunit ama-1. Expressed in germline, oocytes, epidermis, pharyngeal bulb and neurons.

The protein resides in the nucleus. It localises to the nucleus speckle. Acts as a negative regulator of nuclear pre-mRNA 3'-end processing (mRNA polyadenylation). Plays a role in tissue-specific expression of protein isoforms by regulating differential processing of pre-mRNA 3'-end (alternative polyadenylation). In neurons, regulates alternative polyadenylation of specific mRNAs including unc-44 and dlk-1 by interacting with phosphatase ssup-72 and thus preventing ssup-72 dephosphorylation of RNA polymerase II subunit ama-1. Specifically, alters the usage of internal polyadenylation sites (PAS) to promote the production of neuron-specific unc-44 isoform and dlk-1 isoform c, both required for normal synapse and axon development. Conversely, in the epidermis, by inhibiting ssup-72 function, promotes the usage of an internal PAS preventing the production of one of unc-44 isoforms. In neurons, also negatively regulates protein levels of pre-RNA processing protein psf-2. The chain is Synaptic defective enhancer 1 from Caenorhabditis elegans.